The primary structure comprises 466 residues: Glutamate decarboxylase beta (466 aa).

Positions 62 and 83 each coordinate substrate. Residues 126–127 (SS), Thr-212, and His-275 each bind pyridoxal 5'-phosphate. Position 276 is an N6-(pyridoxal phosphate)lysine (Lys-276). N6-acetyllysine is present on residues Lys-446, Lys-453, and Lys-464.

It belongs to the group II decarboxylase family. As to quaternary structure, homohexamer composed of three dimers. It depends on pyridoxal 5'-phosphate as a cofactor.

The catalysed reaction is L-glutamate + H(+) = 4-aminobutanoate + CO2. Functionally, converts glutamate to gamma-aminobutyrate (GABA), consuming one intracellular proton in the reaction. The gad system helps to maintain a near-neutral intracellular pH when cells are exposed to extremely acidic conditions. The ability to survive transit through the acidic conditions of the stomach is essential for successful colonization of the mammalian host by commensal and pathogenic bacteria. This chain is Glutamate decarboxylase beta (gadB), found in Shigella flexneri.